The following is an 82-amino-acid chain: Toxin NaTx-13 (82 aa).

The LCN-type CS-alpha/beta domain occupies 6–70; the sequence is PGGYPVNQFK…KNSIEVFSCG (65 aa). Disulfide bonds link Cys-16-Cys-69, Cys-20-Cys-44, Cys-30-Cys-49, and Cys-34-Cys-51.

It belongs to the long (4 C-C) scorpion toxin superfamily. Sodium channel inhibitor family. Expressed by the venom gland.

It localises to the secreted. Its function is as follows. Probable sodium channel inhibitor. The sequence is that of Toxin NaTx-13 from Centruroides sculpturatus (Arizona bark scorpion).